The sequence spans 363 residues: Ataxin-3 (363 aa).

Positions 1–180 constitute a Josephin domain; the sequence is MESIFHERQE…DCEADQLLQM (180 aa). Catalysis depends on cysteine 14, which acts as the Nucleophile. Histidine 119 acts as the Proton acceptor in catalysis. Asparagine 134 is an active-site residue. A compositionally biased stretch (basic and acidic residues) spans 192 to 209; sequence IGEETAQSRDQRLPRSDV. Residues 192 to 212 are disordered; it reads IGEETAQSRDQRLPRSDVDQA. 3 UIM domains span residues 227–246, 247–266, and 337–356; these read EDEE…IDME, DEEA…SRQS, and SEED…ARNH. Residues 260–290 are compositionally biased toward polar residues; that stretch reads MQGSRQSEFSNSLPQNASQPPHTSQTDSLSS. A disordered region spans residues 260 to 363; the sequence is MQGSRQSEFS…RNHLSTEEKK (104 aa). Residues 353–363 are compositionally biased toward basic and acidic residues; it reads ARNHLSTEEKK.

In terms of tissue distribution, widely expressed.

The protein localises to the nucleus matrix. The protein resides in the nucleus. It localises to the lysosome membrane. The enzyme catalyses Thiol-dependent hydrolysis of ester, thioester, amide, peptide and isopeptide bonds formed by the C-terminal Gly of ubiquitin (a 76-residue protein attached to proteins as an intracellular targeting signal).. In terms of biological role, deubiquitinating enzyme involved in protein homeostasis maintenance, transcription, cytoskeleton regulation, myogenesis and degradation of misfolded chaperone substrates. Binds long polyubiquitin chains and trims them, while it has weak or no activity against chains of 4 or less ubiquitins. Involved in degradation of misfolded chaperone substrates via its interaction with STUB1/CHIP: recruited to monoubiquitinated STUB1/CHIP, and restricts the length of ubiquitin chain attached to STUB1/CHIP substrates and preventing further chain extension. Interacts with key regulators of transcription and represses transcription: acts as a histone-binding protein that regulates transcription. Acts as a negative regulator of mTORC1 signaling in response to amino acid deprivation by mediating deubiquitination of RHEB, thereby promoting RHEB inactivation by the TSC-TBC complex. Regulates autophagy via the deubiquitination of 'Lys-402' of BECN1 leading to the stabilization of BECN1. The protein is Ataxin-3 (ATXN3) of Gallus gallus (Chicken).